A 295-amino-acid polypeptide reads, in one-letter code: Ankyrin repeat and SOCS box protein 17 (295 aa).

An ANK repeat occupies Ser-146–Lys-176. The 64-residue stretch at Leu-232–Ile-295 folds into the SOCS box domain.

Belongs to the ankyrin SOCS box (ASB) family. In terms of tissue distribution, specifically expressed in testis. Not detected in other tissues tested.

Its pathway is protein modification; protein ubiquitination. Functionally, may be a substrate-recognition component of a SCF-like ECS (Elongin-Cullin-SOCS-box protein) E3 ubiquitin-protein ligase complex which mediates the ubiquitination and subsequent proteasomal degradation of target proteins. The protein is Ankyrin repeat and SOCS box protein 17 (ASB17) of Homo sapiens (Human).